The primary structure comprises 604 residues: BTB/POZ domain-containing protein SR1IP1 (604 aa).

Residues 27-96 enclose the BTB domain; sequence SDVTVHVGEA…CYGINFDMST (70 aa). The 274-residue stretch at 201–474 folds into the NPH3 domain; the sequence is DWWAEDLTVL…VQVLYYEQQR (274 aa). At Y415 the chain carries Phosphotyrosine. Disordered regions lie at residues 478–499 and 532–604; these read EVTN…VLPP and FEKE…HSIS. Residues 500–541 are a coiled coil; the sequence is KLSSYTDELSKLKRENQDLKLELLKMKMKLKEFEKESEKKTS. Positions 541–558 are enriched in low complexity; that stretch reads SSSTISTNPSSPISTAST. The segment covering 591–604 has biased composition (basic residues); the sequence is GRTKPPKDRRHSIS.

It belongs to the NPH3 family. Interacts with CAMTA3 and CUL3A.

The protein operates within protein modification; protein ubiquitination. Its function is as follows. Acts as a substrate-specific adapter of an E3 ubiquitin-protein ligase complex (CUL3-RBX1-BTB) which mediates the ubiquitination and subsequent proteasomal degradation of target proteins. Involved in disease resistance. Acts as a substrate adapter that recruits CAMTA3/SR1 for ubiquitination and degradation during pathogen infection. Acts as a positive regulator of plant defense by removing the defense suppressor CAMTA3/SR1. This is BTB/POZ domain-containing protein SR1IP1 from Arabidopsis thaliana (Mouse-ear cress).